A 256-amino-acid chain; its full sequence is DNA repair protein RecO (256 aa).

The protein belongs to the RecO family.

Functionally, involved in DNA repair and RecF pathway recombination. This chain is DNA repair protein RecO, found in Pelotomaculum thermopropionicum (strain DSM 13744 / JCM 10971 / SI).